The following is a 328-amino-acid chain: 7,8-didemethyl-8-hydroxy-5-deazariboflavin synthase (328 aa).

Residues 1–242 form the Radical SAM core domain; sequence MTYSRNIFIP…PDVSIQVPPN (242 aa). Residues Cys-15, Cys-19, and Cys-22 each contribute to the [4Fe-4S] cluster site.

Belongs to the radical SAM superfamily. CofG family. As to quaternary structure, consists of two subunits, CofG and CofH. [4Fe-4S] cluster is required as a cofactor.

The enzyme catalyses 5-amino-5-(4-hydroxybenzyl)-6-(D-ribitylimino)-5,6-dihydrouracil + S-adenosyl-L-methionine = 7,8-didemethyl-8-hydroxy-5-deazariboflavin + 5'-deoxyadenosine + L-methionine + NH4(+) + H(+). It participates in cofactor biosynthesis; coenzyme F0 biosynthesis. Its function is as follows. Catalyzes the radical-mediated synthesis of 7,8-didemethyl-8-hydroxy-5-deazariboflavin from 5-amino-5-(4-hydroxybenzyl)-6-(D-ribitylimino)-5,6-dihydrouracil. In Methanothermobacter thermautotrophicus (strain ATCC 29096 / DSM 1053 / JCM 10044 / NBRC 100330 / Delta H) (Methanobacterium thermoautotrophicum), this protein is 7,8-didemethyl-8-hydroxy-5-deazariboflavin synthase.